Consider the following 103-residue polypeptide: uncharacterized protein (103 aa).

Positions 1–13 (MLLSSIVSFVADA) are cleaved as a signal peptide. Residue Asn67 is glycosylated (N-linked (GlcNAc...) asparagine). The interval 73-103 (LSSDSNRNIIDNSNNNQHPSSSSTSTSWKKF) is disordered.

It localises to the secreted. This is an uncharacterized protein from Dictyostelium discoideum (Social amoeba).